Here is a 163-residue protein sequence, read N- to C-terminus: ATP synthase subunit b, sodium ion specific (163 aa).

Residues 9–29 (VSIDINMFWQIINFLILMFFF) traverse the membrane as a helical segment.

The protein belongs to the ATPase B chain family. In terms of assembly, F-type ATPases have 2 components, F(1) - the catalytic core - and F(0) - the membrane proton channel. F(1) has five subunits: alpha(3), beta(3), gamma(1), delta(1), epsilon(1). F(0) has three main subunits: a(1), b(2) and c(10-14). The alpha and beta chains form an alternating ring which encloses part of the gamma chain. F(1) is attached to F(0) by a central stalk formed by the gamma and epsilon chains, while a peripheral stalk is formed by the delta and b chains.

The protein localises to the cell inner membrane. In terms of biological role, f(1)F(0) ATP synthase produces ATP from ADP in the presence of a proton or sodium gradient. F-type ATPases consist of two structural domains, F(1) containing the extramembraneous catalytic core and F(0) containing the membrane proton channel, linked together by a central stalk and a peripheral stalk. During catalysis, ATP synthesis in the catalytic domain of F(1) is coupled via a rotary mechanism of the central stalk subunits to proton translocation. Functionally, component of the F(0) channel, it forms part of the peripheral stalk, linking F(1) to F(0). The polypeptide is ATP synthase subunit b, sodium ion specific (atpF) (Ilyobacter tartaricus).